Here is a 252-residue protein sequence, read N- to C-terminus: 2-succinyl-6-hydroxy-2,4-cyclohexadiene-1-carboxylate synthase (252 aa).

This sequence belongs to the AB hydrolase superfamily. MenH family. As to quaternary structure, monomer.

The catalysed reaction is 5-enolpyruvoyl-6-hydroxy-2-succinyl-cyclohex-3-ene-1-carboxylate = (1R,6R)-6-hydroxy-2-succinyl-cyclohexa-2,4-diene-1-carboxylate + pyruvate. Its pathway is quinol/quinone metabolism; 1,4-dihydroxy-2-naphthoate biosynthesis; 1,4-dihydroxy-2-naphthoate from chorismate: step 3/7. The protein operates within quinol/quinone metabolism; menaquinone biosynthesis. Functionally, catalyzes a proton abstraction reaction that results in 2,5-elimination of pyruvate from 2-succinyl-5-enolpyruvyl-6-hydroxy-3-cyclohexene-1-carboxylate (SEPHCHC) and the formation of 2-succinyl-6-hydroxy-2,4-cyclohexadiene-1-carboxylate (SHCHC). This chain is 2-succinyl-6-hydroxy-2,4-cyclohexadiene-1-carboxylate synthase, found in Shigella dysenteriae serotype 1 (strain Sd197).